We begin with the raw amino-acid sequence, 343 residues long: MPRDRAGTFTPRMLPKGTRRLTELDDMIISLYAGGMTVRDIQHHLATTLSMDMSPDTISTITDAVLEEVMIWQNRQLDEFYPVIFLDALRVKIRDGHRVVNKSCYMAVGVDMDGIKHILGLWIADNEGASFWASVCADLANRGVQDAFIVCCDGLKGLPEAVEATWPNSMVQTCIVHLIRAANRWVSYQDRKPVSSALREVYTAPTEDTARAALDAFEASELGRKYPQSVKVWRDAWDRFVPFLQFPPAARRVLYTTNSIESLNAELRKATRNRGQFPNDTAALKTLWLMICNIEDKRAAQRAKKAKRAIECNGYIEGAKATGWKQAINQLAVAYPDRFADYL.

This sequence belongs to the transposase mutator family.

Its function is as follows. Required for the transposition of the insertion element. This chain is Probable transposase for insertion sequence element, found in Corynebacterium diphtheriae.